Consider the following 300-residue polypeptide: HTH-type transcriptional activator NahR (300 aa).

Residues 6 to 63 (LDLNLLVVFNQLLVDRRVSITAENLGLTQPAVSNALKRLRTSLQDPLFVRTHQGMEPT) enclose the HTH lysR-type domain. The segment at residues 23 to 42 (VSITAENLGLTQPAVSNALK) is a DNA-binding region (H-T-H motif).

This sequence belongs to the LysR transcriptional regulatory family.

It localises to the cytoplasm. Regulates the expression of the naphthalene (nahA-F) and salicylate (nahG-M) metabolism genes. The sequence is that of HTH-type transcriptional activator NahR (nahR) from Pseudomonas putida (Arthrobacter siderocapsulatus).